Reading from the N-terminus, the 172-residue chain is NAD(P)H-quinone oxidoreductase subunit I, chloroplastic (172 aa).

2 consecutive 4Fe-4S ferredoxin-type domains span residues 55-84 (GRIH…VDWK) and 95-124 (LNYS…MTEE). 8 residues coordinate [4Fe-4S] cluster: cysteine 64, cysteine 67, cysteine 70, cysteine 74, cysteine 104, cysteine 107, cysteine 110, and cysteine 114.

The protein belongs to the complex I 23 kDa subunit family. In terms of assembly, NDH is composed of at least 16 different subunits, 5 of which are encoded in the nucleus. [4Fe-4S] cluster is required as a cofactor.

Its subcellular location is the plastid. It is found in the chloroplast thylakoid membrane. The enzyme catalyses a plastoquinone + NADH + (n+1) H(+)(in) = a plastoquinol + NAD(+) + n H(+)(out). The catalysed reaction is a plastoquinone + NADPH + (n+1) H(+)(in) = a plastoquinol + NADP(+) + n H(+)(out). Its function is as follows. NDH shuttles electrons from NAD(P)H:plastoquinone, via FMN and iron-sulfur (Fe-S) centers, to quinones in the photosynthetic chain and possibly in a chloroplast respiratory chain. The immediate electron acceptor for the enzyme in this species is believed to be plastoquinone. Couples the redox reaction to proton translocation, and thus conserves the redox energy in a proton gradient. This is NAD(P)H-quinone oxidoreductase subunit I, chloroplastic from Olimarabidopsis pumila (Dwarf rocket).